A 306-amino-acid chain; its full sequence is Serine/threonine-protein kinase mug51 (306 aa).

This sequence belongs to the STK19 family.

The enzyme catalyses L-seryl-[protein] + ATP = O-phospho-L-seryl-[protein] + ADP + H(+). It carries out the reaction L-threonyl-[protein] + ATP = O-phospho-L-threonyl-[protein] + ADP + H(+). In terms of biological role, serine/threonine-protein kinase. Has a role in meiosis. This is Serine/threonine-protein kinase mug51 (mug51) from Schizosaccharomyces pombe (strain 972 / ATCC 24843) (Fission yeast).